Reading from the N-terminus, the 657-residue chain is Probable potassium transport system protein Kup (657 aa).

The next 12 membrane-spanning stretches (helical) occupy residues 14–34 (IGGL…SPLY), 47–67 (ADIV…QTTI), 96–116 (IQWL…DGII), 140–160 (TIVY…QFGT), 166–186 (FFAP…FIQI), 201–221 (AYHL…VFLC), 242–262 (ISWI…AAYL), 283–303 (LIMP…AAVI), 340–360 (LYIP…VLHF), 371–391 (GLAI…YLIM), 396–416 (LYFM…FLIA), and 425–445 (GYVT…WYLA).

Belongs to the HAK/KUP transporter (TC 2.A.72) family.

The protein localises to the cell inner membrane. It catalyses the reaction K(+)(in) + H(+)(in) = K(+)(out) + H(+)(out). In terms of biological role, transport of potassium into the cell. Likely operates as a K(+):H(+) symporter. The protein is Probable potassium transport system protein Kup of Flavobacterium johnsoniae (strain ATCC 17061 / DSM 2064 / JCM 8514 / BCRC 14874 / CCUG 350202 / NBRC 14942 / NCIMB 11054 / UW101) (Cytophaga johnsonae).